The primary structure comprises 92 residues: UPF0728 protein C10orf53 homolog (92 aa).

The protein belongs to the UPF0728 family.

The sequence is that of UPF0728 protein C10orf53 homolog from Danio rerio (Zebrafish).